Reading from the N-terminus, the 184-residue chain is MGLLTILKKMKQKERDVRLLMLGLDNAGKTTILKKFNGEDVDTISPTLGFNIKTLEHRGFKLNIWDVGGQKSLRSYWRNYFESTDGLIWVVDSADRQRMQDCQRELQSLLVEERLAGATLLIFANKQDLPGALSCNAIQEALELDSIRSHHWRIQGCSAVTGEDLLPGIDWLLDDISSRVFTAD.

Gly-2 is lipidated: N-myristoyl glycine. 23-30 (GLDNAGKT) contacts GTP. Position 45 is a phosphoserine (Ser-45). GTP contacts are provided by residues 66–70 (DVGGQ) and Gly-68. Lys-71 participates in a covalent cross-link: Glycyl lysine isopeptide (Lys-Gly) (interchain with G-Cter in ubiquitin). Residue 125 to 128 (NKQD) coordinates GTP.

Belongs to the small GTPase superfamily. Arf family. Found in a complex with ARL2, ARL2BP and SLC25A6. Found in a complex with at least ARL2, PPP2CB, PPP2R1A, PPP2R2A, PPP2R5E and TBCD. Interacts with ELMOD2. The GTP-bound form interacts with ARL2BP. The GDP-bound form interacts preferentially with TBCD. Interacts with UNC119. Found in a complex with ARL2, ARL2BP and SLC25A4. The GTP-bound form interacts with PDE6D. In terms of processing, not N-myristoylated. Expressed in brain, retina, lung, cerebellum, liver, kidney, hippocampus, spleen, cortex and heart (at protein level).

It is found in the mitochondrion intermembrane space. The protein localises to the cytoplasm. The protein resides in the cytoskeleton. It localises to the microtubule organizing center. Its subcellular location is the centrosome. It is found in the nucleus. Functionally, small GTP-binding protein which cycles between an inactive GDP-bound and an active GTP-bound form, and the rate of cycling is regulated by guanine nucleotide exchange factors (GEF) and GTPase-activating proteins (GAP). GTP-binding protein that does not act as an allosteric activator of the cholera toxin catalytic subunit. Regulates formation of new microtubules and centrosome integrity. Prevents the TBCD-induced microtubule destruction. Participates in association with TBCD, in the disassembly of the apical junction complexes. Antagonizes the effect of TBCD on epithelial cell detachment and tight and adherens junctions disassembly. Together with ARL2, plays a role in the nuclear translocation, retention and transcriptional activity of STAT3. Component of a regulated secretory pathway involved in Ca(2+)-dependent release of acetylcholine. Required for normal progress through the cell cycle. This chain is ADP-ribosylation factor-like protein 2 (Arl2), found in Rattus norvegicus (Rat).